A 211-amino-acid chain; its full sequence is Protein-methionine-sulfoxide reductase heme-binding subunit MsrQ (211 aa).

Transmembrane regions (helical) follow at residues Trp10 to Ile30, Leu82 to Val102, Pro116 to Thr136, Phe153 to Ser173, and Ile178 to Phe198.

This sequence belongs to the MsrQ family. In terms of assembly, heterodimer of a catalytic subunit (MsrP) and a heme-binding subunit (MsrQ). Requires FMN as cofactor. Heme b is required as a cofactor.

The protein localises to the cell inner membrane. Its function is as follows. Part of the MsrPQ system that repairs oxidized periplasmic proteins containing methionine sulfoxide residues (Met-O), using respiratory chain electrons. Thus protects these proteins from oxidative-stress damage caused by reactive species of oxygen and chlorine generated by the host defense mechanisms. MsrPQ is essential for the maintenance of envelope integrity under bleach stress, rescuing a wide series of structurally unrelated periplasmic proteins from methionine oxidation, including the primary periplasmic chaperone SurA and the lipoprotein Pal. MsrQ provides electrons for reduction to the reductase catalytic subunit MsrP, using the quinone pool of the respiratory chain. The protein is Protein-methionine-sulfoxide reductase heme-binding subunit MsrQ of Escherichia coli (strain 55989 / EAEC).